The following is a 32-amino-acid chain: uncharacterized protein (32 aa).

This is an uncharacterized protein from Ornithodoros (relapsing fever ticks).